We begin with the raw amino-acid sequence, 386 residues long: S-adenosylmethionine synthase (386 aa).

His16 contributes to the ATP binding site. Residue Asp18 participates in Mg(2+) binding. Glu44 serves as a coordination point for K(+). Residues Glu57 and Gln100 each coordinate L-methionine. Residues 100 to 110 form a flexible loop region; it reads QSPDINQGVDR. Residues 164 to 166, 230 to 231, Asp239, 245 to 246, Ala262, and Lys266 contribute to the ATP site; these read DGK, KF, and RK. Asp239 serves as a coordination point for L-methionine. Lys270 is a binding site for L-methionine.

The protein belongs to the AdoMet synthase family. Homotetramer; dimer of dimers. It depends on Mg(2+) as a cofactor. The cofactor is K(+).

The protein localises to the cytoplasm. It catalyses the reaction L-methionine + ATP + H2O = S-adenosyl-L-methionine + phosphate + diphosphate. The protein operates within amino-acid biosynthesis; S-adenosyl-L-methionine biosynthesis; S-adenosyl-L-methionine from L-methionine: step 1/1. Its function is as follows. Catalyzes the formation of S-adenosylmethionine (AdoMet) from methionine and ATP. The overall synthetic reaction is composed of two sequential steps, AdoMet formation and the subsequent tripolyphosphate hydrolysis which occurs prior to release of AdoMet from the enzyme. This chain is S-adenosylmethionine synthase, found in Wolinella succinogenes (strain ATCC 29543 / DSM 1740 / CCUG 13145 / JCM 31913 / LMG 7466 / NCTC 11488 / FDC 602W) (Vibrio succinogenes).